Reading from the N-terminus, the 413-residue chain is Lamin tail domain-containing protein 1 (413 aa).

Disordered stretches follow at residues 1-25 (MMKEASEPLASVTSINKQDSKVQDG) and 102-128 (HKDSSLGKQSTSSMVPRRQPQSSSDVD). Residues 107–128 (LGKQSTSSMVPRRQPQSSSDVD) are compositionally biased toward polar residues. The LTD domain occupies 169–287 (EVGQFTSSSL…EAIAWYTPIH (119 aa)). Residues 356-413 (LPNKSPWCRNPNTSPHPYSSLIDSHDSDISESSLDTQLKPQPTKPKPDPGTKKKKAKS) form a disordered region. Positions 385 to 396 (SESSLDTQLKPQ) are enriched in low complexity.

This sequence belongs to the intermediate filament family.

The polypeptide is Lamin tail domain-containing protein 1 (Lmntd1) (Mus musculus (Mouse)).